The chain runs to 488 residues: Transcriptional coactivator YAP1 (488 aa).

Over residues 1-21 the composition is skewed to pro residues; it reads MEPAQQPPPQPAPQGPAPPSV. Positions 1 to 47 are disordered; the sequence is MEPAQQPPPQPAPQGPAPPSVSPAGTPAAPPAPPAGHQVVHVRGDSE. At S46 the chain carries Phosphoserine. T48 bears the Phosphothreonine mark. The stretch at 71–85 forms a coiled coil; it reads MRLRKLPDSFFKPPE. K75 is subject to N6-lactoyllysine. Positions 76–99 are disordered; it reads LPDSFFKPPEPKSHSRQASTDAGT. S90 and S94 each carry phosphoserine. T95 carries the phosphothreonine modification. T104 is subject to Phosphothreonine; by MAPK8 and MAPK9. S112, S113, S116, and S123 each carry phosphoserine. At S149 the chain carries Phosphoserine; by LATS1 and LATS2. WW domains lie at 156 to 189 and 215 to 248; these read VPLP…DPRK and GPLP…DPRL. Disordered regions lie at residues 261–293 and 339–393; these read SAPV…QIQL and TLEQ…SSYS. The residue at position 274 (S274) is a Phosphoserine. Residues 276 to 488 are transactivation domain; it reads QGGVLGGGSS…LDKESFLTWL (213 aa). Positions 283-344 form a coiled coil; it reads GSSNQQQQIQ…SQLPTLEQDG (62 aa). The segment covering 348–376 has biased composition (polar residues); sequence NAVSSPGMSQELRTMTTNSSDPFLNSGTY. S352 carries the phosphoserine; by MAPK8 and MAPK9 modification. Phosphoserine occurs at positions 356, 366, 367, and 373. S382 carries the post-translational modification Phosphoserine; by LATS1 and LATS2. Residues 384–393 are compositionally biased toward polar residues; sequence DSGLSMSSYS. Phosphoserine; by CK1 occurs at positions 385 and 388. Y392 carries the post-translational modification Phosphotyrosine; by ABL1. Phosphothreonine; by MAPK8 and MAPK9 is present on T397.

This sequence belongs to the YAP1 family. In terms of assembly, part of a complex when phosphorylated that contains DSG3, PKP1, YAP1 and YWHAG; the complex is required for localization of DSG3 and YAP1 to the cell membrane in keratinocytes. Binds to the SH3 domain of the YES kinase. Binds to WBP1 and WBP2. Binds, in vitro, through the WW1 domain, to neural isoforms of ENAH that contain the PPSY motif. The phosphorylated form interacts with YWHAB. Interacts (via WW domains) with LATS1 (via PPxY motif 2). Interacts with LATS2. Interacts (via WW domain 1) with isoform JM-A of ERBB4 (via PPxY motif 2). Interacts with TEAD1, TEAD2 and TEAD3. Interacts with TP73 and HCK. Interacts with RUNX1. Interacts with TEAD4. Interacts (via WW domains) with PTPN14 (via PPxY motif 2); this interaction leads to the cytoplasmic sequestration of YAP1 and inhibits its transcriptional coactivator activity. Interacts (when phosphorylated at Ser-112) with SMAD2, SMAD3 and WWTR1. Interacts with PRRG2 (via cytoplasmic domain). Interacts (via WW domains) with PRRG4 (via cytoplasmic domain). Interacts (phosphorylated) with CLDN18; the interaction sequesters YAP1 away from the nucleus and thereby restricts transcription of YAP1 target genes. Interacts with SMAD1. Interacts with AMOT; the interaction facilitates translocation of YAP1 to the cytoplasm and tight junctions. Interacts with AMOTL2, the interaction is required for ubiquitination of AMOTL2 and localization of YAP1 to tight junctions. Post-translationally, phosphorylated by LATS1 and LATS2; leading to cytoplasmic translocation and inactivation. Phosphorylated by ABL1; leading to YAP1 stabilization, enhanced interaction with TP73 and recruitment onto proapoptotic genes; in response to DNA damage. Phosphorylation at Ser-385 and Ser-388 by CK1 is triggered by previous phosphorylation at Ser-382 by LATS proteins and leads to YAP1 ubiquitination by SCF(beta-TRCP) E3 ubiquitin ligase and subsequent degradation. Phosphorylated at Thr-104, Ser-123, Ser-352 and Thr-397 by MAPK8/JNK1 and MAPK9/JNK2, which is required for the regulation of apoptosis by YAP1. In terms of processing, lactylation by AARS1 promotes nuclear localization and stabilization of YAP1, leading to increased Hippo signaling pathway. Delactylated by SIRT1. Ubiquitinated by SCF(beta-TRCP) E3 ubiquitin ligase. As to expression, isoforms lacking the transactivation domain seen in striatal neurons (at protein level). Ubiquitous. Isoform 2 is expressed at higher levels in the neural tissues. In the embryo, it is expressed in brain, eye, and the maxillary and frontonasal components of the primary palate.

The protein resides in the cytoplasm. It localises to the nucleus. It is found in the cell junction. Its subcellular location is the tight junction. The protein localises to the cell membrane. Its function is as follows. Transcriptional regulator with dual roles as a coactivator and corepressor. Critical downstream regulatory target in the Hippo signaling pathway, crucial for organ size control and tumor suppression by restricting proliferation and promoting apoptosis. The Hippo signaling pathway core involves a kinase cascade featuring STK3/MST2 and STK4/MST1, along with its regulatory partner SAV1, which phosphorylates and activates LATS1/2 in complex with their regulatory protein, MOB1. This activation leads to the phosphorylation and inactivation of the YAP1 oncoprotein and WWTR1/TAZ. Phosphorylation of YAP1 by LATS1/2 prevents its nuclear translocation, thereby regulating the expression of its target genes. The transcriptional regulation of gene expression requires TEAD transcription factors and modulates cell growth, anchorage-independent growth, and induction of epithelial-mesenchymal transition (EMT). Plays a key role in tissue tension and 3D tissue shape by regulating the cortical actomyosin network, acting via ARHGAP18, a Rho GTPase activating protein that suppresses F-actin polymerization. It also suppresses ciliogenesis by acting as a transcriptional corepressor of TEAD4 target genes AURKA and PLK1. In conjunction with WWTR1, regulates TGFB1-dependent SMAD2 and SMAD3 nuclear accumulation. Synergizes with WBP2 to enhance PGR activity. In Mus musculus (Mouse), this protein is Transcriptional coactivator YAP1 (Yap1).